A 168-amino-acid polypeptide reads, in one-letter code: Disulfide bond formation protein B (168 aa).

The Cytoplasmic segment spans residues 1–6 (MTSRWI). The chain crosses the membrane as a helical span at residues 7–23 (FGLVFLVCAGLLAVAFY). The Periplasmic portion of the chain corresponds to 24 to 41 (MEHVMGLEPCPLCWLQRF). Residues cysteine 33 and cysteine 36 are joined by a disulfide bond. A helical transmembrane segment spans residues 42-58 (GFMGAGLVSLLAFLHGP). The Cytoplasmic portion of the chain corresponds to 59-65 (RGFGNRV). The helical transmembrane segment at 66–82 (YGLLLIVAAGAGLAVAG) threads the bilayer. At 83 to 139 (RQLWLQSLPADQVPACGPSVDYMLEVLPWFEVLQTALKGTGDCAEVVWRFLGLSIPG) the chain is on the periplasmic side. A disulfide bridge connects residues cysteine 98 and cysteine 125. The chain crosses the membrane as a helical span at residues 140 to 158 (WTAVFFSLLIVLGLFVMLR). Residues 159-168 (RYSPRDWLQS) are Cytoplasmic-facing.

It belongs to the DsbB family.

The protein localises to the cell inner membrane. Its function is as follows. Required for disulfide bond formation in some periplasmic proteins. Acts by oxidizing the DsbA protein. The sequence is that of Disulfide bond formation protein B from Marinobacter nauticus (strain ATCC 700491 / DSM 11845 / VT8) (Marinobacter aquaeolei).